A 299-amino-acid polypeptide reads, in one-letter code: Protein N-terminal and lysine N-methyltransferase EFM7 (299 aa).

S-adenosyl-L-methionine is bound by residues Trp-74, 100–102 (GAG), Asp-122, Trp-155, and Ser-178.

The protein belongs to the class I-like SAM-binding methyltransferase superfamily. EFM7 family.

The protein resides in the cytoplasm. Its function is as follows. S-adenosyl-L-methionine-dependent protein methyltransferase that trimethylates the N-terminal glycine 'Gly-2' of elongation factor 1-alpha, before also catalyzing the mono- and dimethylation of 'Lys-3'. The chain is Protein N-terminal and lysine N-methyltransferase EFM7 from Cryptococcus neoformans var. neoformans serotype D (strain B-3501A) (Filobasidiella neoformans).